Here is a 512-residue protein sequence, read N- to C-terminus: Glutamate--tRNA ligase (512 aa).

The 'HIGH' region signature appears at 11–21 (PSPTGALHIGG). Residues 263 to 267 (KLSKR) carry the 'KMSKS' region motif. Lys-266 serves as a coordination point for ATP.

Belongs to the class-I aminoacyl-tRNA synthetase family. Glutamate--tRNA ligase type 1 subfamily. In terms of assembly, monomer.

The protein localises to the cytoplasm. It carries out the reaction tRNA(Glu) + L-glutamate + ATP = L-glutamyl-tRNA(Glu) + AMP + diphosphate. Functionally, catalyzes the attachment of glutamate to tRNA(Glu) in a two-step reaction: glutamate is first activated by ATP to form Glu-AMP and then transferred to the acceptor end of tRNA(Glu). The polypeptide is Glutamate--tRNA ligase (Amoebophilus asiaticus (strain 5a2)).